The chain runs to 346 residues: D-erythrose-4-phosphate dehydrogenase (346 aa).

Position 11–12 (11–12 (RI)) interacts with NAD(+). Residues 163 to 165 (SCT), Arg-209, 222 to 223 (TK), and Arg-245 each bind substrate. Cys-164 (nucleophile) is an active-site residue. Asn-327 is an NAD(+) binding site.

Belongs to the glyceraldehyde-3-phosphate dehydrogenase family. Epd subfamily. Homotetramer.

It is found in the cytoplasm. It carries out the reaction D-erythrose 4-phosphate + NAD(+) + H2O = 4-phospho-D-erythronate + NADH + 2 H(+). Its pathway is cofactor biosynthesis; pyridoxine 5'-phosphate biosynthesis; pyridoxine 5'-phosphate from D-erythrose 4-phosphate: step 1/5. Functionally, catalyzes the NAD-dependent conversion of D-erythrose 4-phosphate to 4-phosphoerythronate. This Vibrio vulnificus (strain YJ016) protein is D-erythrose-4-phosphate dehydrogenase.